The following is a 184-amino-acid chain: Leucine-rich repeat-containing protein 20 (184 aa).

5 LRR repeats span residues 51-72 (QIHL…FMTT), 75-96 (QLRE…VSAL), 98-120 (HLKA…TALP), 121-141 (ALET…EKLA), and 145-167 (ALRS…APPL). Residue Ser175 is modified to Phosphoserine.

The chain is Leucine-rich repeat-containing protein 20 (LRRC20) from Homo sapiens (Human).